A 560-amino-acid chain; its full sequence is Dihydroxy-acid dehydratase (560 aa).

Cys-50 serves as a coordination point for [2Fe-2S] cluster. Asp-82 lines the Mg(2+) pocket. Cys-123 serves as a coordination point for [2Fe-2S] cluster. Residues Asp-124 and Lys-125 each coordinate Mg(2+). Lys-125 carries the N6-carboxylysine modification. Cys-195 contacts [2Fe-2S] cluster. Residue Glu-447 coordinates Mg(2+). Ser-473 (proton acceptor) is an active-site residue.

The protein belongs to the IlvD/Edd family. In terms of assembly, homodimer. [2Fe-2S] cluster serves as cofactor. Requires Mg(2+) as cofactor.

It carries out the reaction (2R)-2,3-dihydroxy-3-methylbutanoate = 3-methyl-2-oxobutanoate + H2O. It catalyses the reaction (2R,3R)-2,3-dihydroxy-3-methylpentanoate = (S)-3-methyl-2-oxopentanoate + H2O. It participates in amino-acid biosynthesis; L-isoleucine biosynthesis; L-isoleucine from 2-oxobutanoate: step 3/4. It functions in the pathway amino-acid biosynthesis; L-valine biosynthesis; L-valine from pyruvate: step 3/4. In terms of biological role, functions in the biosynthesis of branched-chain amino acids. Catalyzes the dehydration of (2R,3R)-2,3-dihydroxy-3-methylpentanoate (2,3-dihydroxy-3-methylvalerate) into 2-oxo-3-methylpentanoate (2-oxo-3-methylvalerate) and of (2R)-2,3-dihydroxy-3-methylbutanoate (2,3-dihydroxyisovalerate) into 2-oxo-3-methylbutanoate (2-oxoisovalerate), the penultimate precursor to L-isoleucine and L-valine, respectively. The protein is Dihydroxy-acid dehydratase of Thermosynechococcus vestitus (strain NIES-2133 / IAM M-273 / BP-1).